A 570-amino-acid chain; its full sequence is Urease subunit alpha (570 aa).

The region spanning 131 to 570 is the Urease domain; that stretch reads GGIDSHIHFI…LPMTQRYFLF (440 aa). Residues histidine 136, histidine 138, and lysine 219 each contribute to the Ni(2+) site. Lysine 219 is modified (N6-carboxylysine). Histidine 221 is a substrate binding site. Ni(2+)-binding residues include histidine 248 and histidine 274. Histidine 322 (proton donor) is an active-site residue. Residue aspartate 362 coordinates Ni(2+).

Belongs to the metallo-dependent hydrolases superfamily. Urease alpha subunit family. In terms of assembly, heterotrimer of UreA (gamma), UreB (beta) and UreC (alpha) subunits. Three heterotrimers associate to form the active enzyme. The cofactor is Ni cation. Post-translationally, carboxylation allows a single lysine to coordinate two nickel ions.

The protein resides in the cytoplasm. It catalyses the reaction urea + 2 H2O + H(+) = hydrogencarbonate + 2 NH4(+). It functions in the pathway nitrogen metabolism; urea degradation; CO(2) and NH(3) from urea (urease route): step 1/1. The chain is Urease subunit alpha from Trichodesmium erythraeum (strain IMS101).